The chain runs to 293 residues: Outer membrane protein assembly factor BamD (293 aa).

The signal sequence occupies residues 1–26 (MIQRPTFFSPIHLLAVLLATFILITG). Cysteine 27 carries N-palmitoyl cysteine lipidation. Cysteine 27 is lipidated: S-diacylglycerol cysteine.

Belongs to the BamD family. In terms of assembly, part of the Bam complex.

It localises to the cell outer membrane. Functionally, part of the outer membrane protein assembly complex, which is involved in assembly and insertion of beta-barrel proteins into the outer membrane. This chain is Outer membrane protein assembly factor BamD, found in Xylella fastidiosa (strain Temecula1 / ATCC 700964).